A 249-amino-acid polypeptide reads, in one-letter code: Triosephosphate isomerase (249 aa).

8–10 (NWK) provides a ligand contact to substrate. His95 functions as the Electrophile in the catalytic mechanism. The active-site Proton acceptor is the Glu163. Gly169 and Ser209 together coordinate substrate.

This sequence belongs to the triosephosphate isomerase family. In terms of assembly, homodimer.

Its subcellular location is the cytoplasm. The catalysed reaction is D-glyceraldehyde 3-phosphate = dihydroxyacetone phosphate. The protein operates within carbohydrate biosynthesis; gluconeogenesis. Its pathway is carbohydrate degradation; glycolysis; D-glyceraldehyde 3-phosphate from glycerone phosphate: step 1/1. In terms of biological role, involved in the gluconeogenesis. Catalyzes stereospecifically the conversion of dihydroxyacetone phosphate (DHAP) to D-glyceraldehyde-3-phosphate (G3P). The chain is Triosephosphate isomerase from Orientia tsutsugamushi (strain Boryong) (Rickettsia tsutsugamushi).